The sequence spans 257 residues: Pyridoxine 5'-phosphate synthase (257 aa).

Asparagine 6 is a binding site for 3-amino-2-oxopropyl phosphate. Position 8–9 (8–9 (DH)) interacts with 1-deoxy-D-xylulose 5-phosphate. Arginine 17 provides a ligand contact to 3-amino-2-oxopropyl phosphate. The Proton acceptor role is filled by histidine 42. Residues arginine 44 and histidine 49 each coordinate 1-deoxy-D-xylulose 5-phosphate. Glutamate 69 serves as the catalytic Proton acceptor. A 1-deoxy-D-xylulose 5-phosphate-binding site is contributed by threonine 99. The active-site Proton donor is histidine 211. Residues glycine 212 and 233–234 (GQ) each bind 3-amino-2-oxopropyl phosphate.

The protein belongs to the PNP synthase family. In terms of assembly, homooctamer; tetramer of dimers.

The protein resides in the cytoplasm. It carries out the reaction 3-amino-2-oxopropyl phosphate + 1-deoxy-D-xylulose 5-phosphate = pyridoxine 5'-phosphate + phosphate + 2 H2O + H(+). The protein operates within cofactor biosynthesis; pyridoxine 5'-phosphate biosynthesis; pyridoxine 5'-phosphate from D-erythrose 4-phosphate: step 5/5. Functionally, catalyzes the complicated ring closure reaction between the two acyclic compounds 1-deoxy-D-xylulose-5-phosphate (DXP) and 3-amino-2-oxopropyl phosphate (1-amino-acetone-3-phosphate or AAP) to form pyridoxine 5'-phosphate (PNP) and inorganic phosphate. The chain is Pyridoxine 5'-phosphate synthase from Campylobacter fetus subsp. fetus (strain 82-40).